A 143-amino-acid chain; its full sequence is Nucleoside diphosphate kinase (143 aa).

The ATP site is built by Lys-11, Phe-59, Arg-87, Thr-93, Arg-104, and Asn-114. The active-site Pros-phosphohistidine intermediate is His-117.

Belongs to the NDK family. Homotetramer. Mg(2+) is required as a cofactor.

The protein localises to the cytoplasm. It catalyses the reaction a 2'-deoxyribonucleoside 5'-diphosphate + ATP = a 2'-deoxyribonucleoside 5'-triphosphate + ADP. It carries out the reaction a ribonucleoside 5'-diphosphate + ATP = a ribonucleoside 5'-triphosphate + ADP. Its function is as follows. Major role in the synthesis of nucleoside triphosphates other than ATP. The ATP gamma phosphate is transferred to the NDP beta phosphate via a ping-pong mechanism, using a phosphorylated active-site intermediate. The chain is Nucleoside diphosphate kinase from Cronobacter sakazakii (strain ATCC BAA-894) (Enterobacter sakazakii).